Reading from the N-terminus, the 472-residue chain is Phenylalanine--tRNA ligase, mitochondrial (472 aa).

Substrate contacts are provided by residues 157–160 (SAHQ), Arg-179, 186–188 (QHY), and 193–195 (QLE). The residue at position 202 (Lys-202) is an N6-acetyllysine. Residues Glu-287 and Phe-312 each contribute to the substrate site. The region spanning 379 to 471 (SKYPAVFNDI…AVQLLGVEGR (93 aa)) is the FDX-ACB domain.

Belongs to the class-II aminoacyl-tRNA synthetase family. Monomer. As to expression, mainly expressed in the Purkinje cell of cerebellum.

It localises to the mitochondrion matrix. Its subcellular location is the mitochondrion. It carries out the reaction tRNA(Phe) + L-phenylalanine + ATP = L-phenylalanyl-tRNA(Phe) + AMP + diphosphate + H(+). In terms of biological role, is responsible for the charging of tRNA(Phe) with phenylalanine in mitochondrial translation. To a lesser extent, also catalyzes direct attachment of m-Tyr (an oxidized version of Phe) to tRNA(Phe), thereby opening the way for delivery of the misacylated tRNA to the ribosome and incorporation of ROS-damaged amino acid into proteins. This Rattus norvegicus (Rat) protein is Phenylalanine--tRNA ligase, mitochondrial (Fars2).